Reading from the N-terminus, the 1325-residue chain is Nucleoporin nup146 (1325 aa).

Disordered regions lie at residues 1–20, 453–474, 758–951, and 973–994; these read MNAE…AGGS, VRAS…FVKN, GEGL…PKIH, and FPKQ…QESL. Over residues 763–778 the composition is skewed to polar residues; sequence QQKTSKALPSTGITKL. Over residues 779–791 the composition is skewed to basic and acidic residues; the sequence is SENDNEKAEESNE. Residues 792–801 are compositionally biased toward polar residues; it reads TKGFNTTIAK. Over residues 802–811 the composition is skewed to basic and acidic residues; it reads QNDKSSKSEG. 2 stretches are compositionally biased toward polar residues: residues 816–835 and 850–861; these read ANMS…SKPS and FTFNKPSETPPF. The segment covering 867–881 has biased composition (basic and acidic residues); sequence LVEKESKQDVSDTSD. The residue at position 899 (T899) is a Phosphothreonine. Residues 927-937 are compositionally biased toward acidic residues; it reads SEIEDQDEESS. A Phosphothreonine modification is found at T946. Residues S1041, S1043, and S1044 each carry the phosphoserine modification.

Its subcellular location is the cytoplasm. The protein localises to the nucleus. Its function is as follows. Functions as a component of the nuclear pore complex (NPC). NPC components, collectively referred to as nucleoporins (NUPs), can play the role of both NPC structural components and of docking or interaction partners for transiently associated nuclear transport factors. Active directional transport is assured by both, a Phe-Gly (FG) repeat affinity gradient for these transport factors across the NPC and a transport cofactor concentration gradient across the nuclear envelope. The protein is Nucleoporin nup146 (nup146) of Schizosaccharomyces pombe (strain 972 / ATCC 24843) (Fission yeast).